The following is a 356-amino-acid chain: Protein trichome birefringence-like 41 (356 aa).

A helical; Signal-anchor for type II membrane protein membrane pass occupies residues 12 to 31 (SALVLSLLLLLLLPLLHEAA). Positions 107 to 109 (GDS) match the GDS motif motif. A DCXHWCLPGXXDXWN motif motif is present at residues 333 to 347 (DCSHWCLSGVPDTWN).

Belongs to the PC-esterase family. TBL subfamily.

The protein resides in the membrane. Functionally, may act as a bridging protein that binds pectin and other cell wall polysaccharides. Probably involved in maintaining esterification of pectins. May be involved in the specific O-acetylation of cell wall polymers. The chain is Protein trichome birefringence-like 41 (TBL41) from Arabidopsis thaliana (Mouse-ear cress).